We begin with the raw amino-acid sequence, 270 residues long: Tryptophan synthase alpha chain (270 aa).

Active-site proton acceptor residues include Glu-57 and Asp-68.

This sequence belongs to the TrpA family. In terms of assembly, tetramer of two alpha and two beta chains.

It carries out the reaction (1S,2R)-1-C-(indol-3-yl)glycerol 3-phosphate + L-serine = D-glyceraldehyde 3-phosphate + L-tryptophan + H2O. The protein operates within amino-acid biosynthesis; L-tryptophan biosynthesis; L-tryptophan from chorismate: step 5/5. Functionally, the alpha subunit is responsible for the aldol cleavage of indoleglycerol phosphate to indole and glyceraldehyde 3-phosphate. This chain is Tryptophan synthase alpha chain, found in Mycobacterium bovis (strain ATCC BAA-935 / AF2122/97).